We begin with the raw amino-acid sequence, 512 residues long: mRNA export factor (512 aa).

A compositionally biased stretch (low complexity) spans 1–15; the sequence is MATDIDMLIDLGLDL. Residues 1-243 are disordered; sequence MATDIDMLID…APERKAPAAD (243 aa). Positions 5 to 17 match the Nuclear export signal motif; the sequence is IDMLIDLGLDLSD. Phosphoserine; by host is present on residues Ser-16 and Ser-18. Composition is skewed to acidic residues over residues 16-26 and 35-51; these read SDSDLDEDPPE and LESDSSGECSSSDEDME. The interaction with host ALYREF stretch occupies residues 104–112; it reads VWSRLGARR. Positions 110-138 match the Nuclear localization signal motif; the sequence is ARRPSCSPEQHGGKVARLQPPPTKAQPAR. A Phosphoserine; by host modification is found at Ser-114. Arg-138 is subject to Dimethylated arginine; by host. Positions 138 to 152 are RGG-box; the sequence is RGGRRGRRRGRGRGG. The segment covering 139 to 149 has biased composition (basic residues); the sequence is GGRRGRRRGRG. Arg-148 is modified (omega-N-methylarginine; by host). At Arg-150 the chain carries Dimethylated arginine; by host. Residues 214 to 233 show a composition bias toward pro residues; sequence APPPLMTLAIAPPPADPRAP. Zn(2+) contacts are provided by Cys-400, His-479, Cys-483, and Cys-488. The CHC2-type zinc-finger motif lies at 400–488; sequence CYLKARGLCG…HRQECSSRVC (89 aa). The important for homodimerization stretch occupies residues 500–512; sequence YVHGKYFYCNSLF.

It belongs to the HHV-1 ICP27 protein family. As to quaternary structure, homodimer. Interacts with host RBP1; this interaction facilitates the RNA polymerase recruitment to viral transcription sites. Interacts (via the RGG box) with host ALYREF/THOC4; this interaction recruits ALYREF to viral replication compartments and probably directs viral mRNA to the TAP/NFX1 pathway. Interacts with host ALYREF2. Interacts (via the RGG box) with host SRPK1; this interaction relocalizes SRPK1 to the nucleus and seems to alter its activity. Interacts with ICP4; this interaction modulates ICP4 DNA-binding activity. Interacts with host NXF1; this interaction allows efficient export of HHV-1 early and late transcripts. Post-translationally, methylated within the RGG box possibly by host PRMT1. When hypomethylated, ICP27 is exported to the cytoplasm earlier and more rapidly. In terms of processing, phosphorylated.

It is found in the host cytoplasm. It localises to the host nucleus. Multifunctional regulator of the expression of viral genes that contributes to the shutoff of host protein synthesis and mediates nuclear export of viral intronless mRNAs. Early in infection, this immediate early (EI) protein mediates the inhibition of cellular splicing. This results in the accumulation of unprocessed 3'end pre-mRNAs which can't be exported from the nucleus. Cellular protein synthesis is thereby shut off early after virus infection. Later in the infection, it helps recruit cellular RNA polymerase II to viral replication sites and promotes the nuclear export of viral intronless mRNAs by interacting with mRNAs and host NXF1/TAP. ICP27 binds to NUP62 which may provide facilitated viral mRNA export and may indirectly compete with some host cell transport receptors for binding and inhibit cellular nucleocytoplasmic transport pathways. Also stimulates translation of viral transcripts. Repression of host gene expression blocks the cell cycle at the G1 phase and prevents apoptosis. Seems to silence the 3' splice site of the promyelocytic leukemia (PML) intron 7a, thereby switching PML isoforms from PML-II to PML-V. This could be linked to the accelerated mRNA export induced by ICP27 which might not provide sufficient time for PML pre-mRNA to be spliced in the nucleus. The sequence is that of mRNA export factor from Homo sapiens (Human).